The sequence spans 109 residues: UPF0060 membrane protein RC1_3291 (109 aa).

A run of 4 helical transmembrane segments spans residues 4–24, 31–51, 59–79, and 88–108; these read IATY…FWAW, PLWL…LTRI, AYAA…WLVE, and TLGT…PRGG.

This sequence belongs to the UPF0060 family.

The protein localises to the cell inner membrane. The protein is UPF0060 membrane protein RC1_3291 of Rhodospirillum centenum (strain ATCC 51521 / SW).